We begin with the raw amino-acid sequence, 205 residues long: Nuclear transcription factor Y subunit C-6 (205 aa).

Residues 1–24 are disordered; the sequence is MEPKSTTPPPPPPPPVLGAPVPYP.

The protein belongs to the NFYC/HAP5 subunit family. As to quaternary structure, heterotrimeric transcription factor composed of three components, NF-YA, NF-YB and NF-YC. NF-YB and NF-YC must interact and dimerize for NF-YA association and DNA binding. Interacts with NFYB2. Interacts with NFYB8, NFYB10 and HD5/NFYB11.

The protein resides in the nucleus. It localises to the cytoplasm. In terms of biological role, component of the NF-Y/HAP transcription factor complex. This Oryza sativa subsp. japonica (Rice) protein is Nuclear transcription factor Y subunit C-6.